The sequence spans 106 residues: UPF0145 protein PputGB1_2909 (106 aa).

This sequence belongs to the UPF0145 family.

The protein is UPF0145 protein PputGB1_2909 of Pseudomonas putida (strain GB-1).